Reading from the N-terminus, the 132-residue chain is Large ribosomal subunit protein bL12 (132 aa).

The interval 112 to 132 is disordered; it reads KEAADKAKTQLEGAGGTINLK.

The protein belongs to the bacterial ribosomal protein bL12 family. As to quaternary structure, homodimer. Part of the ribosomal stalk of the 50S ribosomal subunit. Forms a multimeric L10(L12)X complex, where L10 forms an elongated spine to which 2 to 4 L12 dimers bind in a sequential fashion. Binds GTP-bound translation factors.

Its function is as follows. Forms part of the ribosomal stalk which helps the ribosome interact with GTP-bound translation factors. Is thus essential for accurate translation. The sequence is that of Large ribosomal subunit protein bL12 from Leifsonia xyli subsp. xyli (strain CTCB07).